A 299-amino-acid polypeptide reads, in one-letter code: Tyrosine recombinase XerC (299 aa).

The Core-binding (CB) domain maps to 1–85 (MQADLDAFLD…ALRGFYRYLL (85 aa)). Residues 106–285 (RLPRTLDADR…DFQHLAAVYD (180 aa)) enclose the Tyr recombinase domain. Residues Arg146, Lys170, His237, Arg240, and His263 contribute to the active site. Catalysis depends on Tyr272, which acts as the O-(3'-phospho-DNA)-tyrosine intermediate.

This sequence belongs to the 'phage' integrase family. XerC subfamily. As to quaternary structure, forms a cyclic heterotetrameric complex composed of two molecules of XerC and two molecules of XerD.

It is found in the cytoplasm. Site-specific tyrosine recombinase, which acts by catalyzing the cutting and rejoining of the recombining DNA molecules. The XerC-XerD complex is essential to convert dimers of the bacterial chromosome into monomers to permit their segregation at cell division. It also contributes to the segregational stability of plasmids. The protein is Tyrosine recombinase XerC of Azotobacter vinelandii (strain DJ / ATCC BAA-1303).